The following is a 463-amino-acid chain: Myocyte-specific enhancer factor 2C (463 aa).

The MADS-box domain maps to 3-57; the sequence is RKKIQITRIMDERNRQVTFTKRKFGLMKKAYELSVLCDCEIALIIFNSTNKLFQY. Lys4 carries the N6-acetyllysine modification. The mef2-type DNA-binding region spans 58 to 86; that stretch reads ASTDMDKVLLKYTEYNEPHESRTNSDIVE. The residue at position 59 (Ser59) is a Phosphoserine; by CK2. A phosphoserine mark is found at Ser98 and Ser104. Residues Lys114 and Lys117 each carry the N6-acetyllysine modification. Residues 178–223 are disordered; the sequence is NSMSPGVTHRPPSAGNTGGLMGGDLTSGAGTSAGNGYGNPRNSPGL. Phosphoserine is present on residues Ser220 and Ser226. Lys232 and Lys237 each carry N6-acetyllysine. Ser238 carries the phosphoserine modification. Residues Lys250 and Lys262 each carry the N6-acetyllysine modification. Thr283 and Thr290 each carry phosphothreonine; by MAPK7 and MAPK14. Residues 358 to 389 are transcription repressor; sequence ACTSTHLSQSSNLSLPSTQSLNIKSEPVSPPR. A compositionally biased stretch (polar residues) spans 365 to 380; that stretch reads SQSSNLSLPSTQSLNI. Residues 365 to 463 are disordered; sequence SQSSNLSLPS…RMRLSEGWAT (99 aa). Lys381 is covalently cross-linked (Glycyl lysine isopeptide (Lys-Gly) (interchain with G-Cter in SUMO)). Ser386 is modified (phosphoserine; by CDK5). At Ser409 the chain carries Phosphoserine; by MAPK7. Residues 409 to 422 show a composition bias toward low complexity; it reads SPVDSLSSCSSSYD. Residues 423 to 433 show a composition bias toward basic and acidic residues; the sequence is GSDREDHRNEF. Ser435 is subject to Phosphoserine.

As to quaternary structure, forms a complex with class II HDACs in undifferentiating cells. On myogenic differentiation, HDACs are released into the cytoplasm allowing MEF2s to interact with other proteins for activation. Interacts with EP300 in differentiating cells; the interaction acetylates MEF2C leading to increased DNA binding and activation. Interacts with HDAC7 and CARM1. Interacts with HDAC4, HDAC7 and HDAC9; the interaction with HDACs represses transcriptional activity. Interacts with LPIN1. Interacts with MYOCD. Interacts with AKAP13. Interacts with FOXK1; the interaction inhibits MEF2C transactivation activity. Interacts (via N-terminus) with HABP4; this interaction decreases DNA-binding activity of MEF2C in myocardial cells in response to mechanical stress. Interacts with JPH2; interaction specifically takes place with the Junctophilin-2 N-terminal fragment cleavage product of JPH2. Interacts (via MADS box) with SOX18. Interacts with PHF7; the interaction promotes MEF2C binding to its transcription targets. In terms of processing, phosphorylated on Ser-59; which enhances DNA binding activity. Phosphorylated on Ser-386; which is required for Lys-381 sumoylation and inhibits transcriptional activity. Post-translationally, acetylated by p300 on several sites in diffentiating myocytes. Acetylation on Lys-4 increases DNA binding and transactivation. Sumoylated on Lys-381 with SUMO2 but not SUMO1; which represses transcriptional activity. In terms of processing, proteolytically cleaved in cerebellar granule neurons on several sites by caspase 3 and caspase 7 following neurotoxicity. Preferentially cleaves the CDK5-mediated hyperphosphorylated form which leads to neuron apoptosis and transcriptional inactivation.

It localises to the nucleus. Its subcellular location is the cytoplasm. It is found in the sarcoplasm. Functionally, transcription activator which binds specifically to the MEF2 element present in the regulatory regions of many muscle-specific genes. Controls cardiac morphogenesis and myogenesis, and is also involved in vascular development. Enhances transcriptional activation mediated by SOX18. Plays an essential role in hippocampal-dependent learning and memory by suppressing the number of excitatory synapses and thus regulating basal and evoked synaptic transmission. Crucial for normal neuronal development, distribution, and electrical activity in the neocortex. Necessary for proper development of megakaryocytes and platelets and for bone marrow B-lymphopoiesis. Required for B-cell survival and proliferation in response to BCR stimulation, efficient IgG1 antibody responses to T-cell-dependent antigens and for normal induction of germinal center B-cells. May also be involved in neurogenesis and in the development of cortical architecture. The polypeptide is Myocyte-specific enhancer factor 2C (Sus scrofa (Pig)).